A 528-amino-acid chain; its full sequence is Atypical kinase COQ8B, mitochondrial (528 aa).

The helical transmembrane segment at 93 to 109 (LASFGGLAVGLGLGALA) threads the bilayer. The KxGQ motif motif lies at 151 to 154 (KIGQ). One can recognise a Protein kinase domain in the interval 187-419 (MMKVLEEELG…DRVLQKSQDL (233 aa)). Positions 212 to 215 (AAAS) match the AAAS motif motif. ATP contacts are provided by residues S215, K233, and 320–323 (MELA). The active-site Proton acceptor is the D363. 2 residues coordinate ATP: N368 and D382.

This sequence belongs to the protein kinase superfamily. ADCK protein kinase family. In terms of assembly, homodimer; homodimerizes via its transmembrane region. Interacts with COQ6 and COQ7. Interacts with the multi-subunit COQ enzyme complex, composed of at least COQ3, COQ4, COQ5, COQ6, COQ7 and COQ9. In terms of tissue distribution, in the kidney, expressed in glomeruli, predominantly in podocyte foot precesses, as well as in proximal tubules and collecting ducts (at protein level).

The protein localises to the mitochondrion membrane. The protein resides in the cytoplasm. It localises to the cytosol. Its subcellular location is the cell membrane. It functions in the pathway cofactor biosynthesis; ubiquinone biosynthesis. Its function is as follows. Atypical kinase involved in the biosynthesis of coenzyme Q, also named ubiquinone, an essential lipid-soluble electron transporter for aerobic cellular respiration. Its substrate specificity is still unclear: may act as a protein kinase that mediates phosphorylation of COQ3. According to other reports, acts as a small molecule kinase, possibly a lipid kinase that phosphorylates a prenyl lipid in the ubiquinone biosynthesis pathway, as suggested by its ability to bind coenzyme Q lipid intermediates. However, the small molecule kinase activity was not confirmed by another publication. Required for podocyte migration. The chain is Atypical kinase COQ8B, mitochondrial from Rattus norvegicus (Rat).